A 477-amino-acid chain; its full sequence is uncharacterized protein (477 aa).

Residues 107 to 129 form a helical membrane-spanning segment; that stretch reads VNFWSLSMACASVLALLGLVYLI.

The protein localises to the membrane. This is an uncharacterized protein from Treponema pallidum (strain Nichols).